Here is a 208-residue protein sequence, read N- to C-terminus: Small ribosomal subunit protein uS5 (208 aa).

Basic and acidic residues predominate over residues 1 to 21 (MSDREQRDGGRSAENNNDRKG). The disordered stretch occupies residues 1 to 38 (MSDREQRDGGRSAENNNDRKGRNNGRRNDRRNHQDNER). In terms of domain architecture, S5 DRBM spans 41 to 104 (YIERVVTINR…EEARKNFFRV (64 aa)).

It belongs to the universal ribosomal protein uS5 family. As to quaternary structure, part of the 30S ribosomal subunit. Contacts proteins S4 and S8.

Its function is as follows. With S4 and S12 plays an important role in translational accuracy. Located at the back of the 30S subunit body where it stabilizes the conformation of the head with respect to the body. In Corynebacterium aurimucosum (strain ATCC 700975 / DSM 44827 / CIP 107346 / CN-1) (Corynebacterium nigricans), this protein is Small ribosomal subunit protein uS5.